A 584-amino-acid polypeptide reads, in one-letter code: uncharacterized protein (584 aa).

This is an uncharacterized protein from Magallana gigas (Pacific oyster).